A 210-amino-acid chain; its full sequence is Proteasome subunit beta (210 aa).

A propeptide spans 1–7 (MEVLKTG) (removed in mature form; by autocatalysis). Catalysis depends on Thr-8, which acts as the Nucleophile.

It belongs to the peptidase T1B family. The 20S proteasome core is composed of 14 alpha and 14 beta subunits that assemble into four stacked heptameric rings, resulting in a barrel-shaped structure. The two inner rings, each composed of seven catalytic beta subunits, are sandwiched by two outer rings, each composed of seven alpha subunits. The catalytic chamber with the active sites is on the inside of the barrel. Has a gated structure, the ends of the cylinder being occluded by the N-termini of the alpha-subunits. Is capped at one or both ends by the proteasome regulatory ATPase, PAN.

The protein localises to the cytoplasm. It carries out the reaction Cleavage of peptide bonds with very broad specificity.. Its activity is regulated as follows. The formation of the proteasomal ATPase PAN-20S proteasome complex, via the docking of the C-termini of PAN into the intersubunit pockets in the alpha-rings, triggers opening of the gate for substrate entry. Interconversion between the open-gate and close-gate conformations leads to a dynamic regulation of the 20S proteasome proteolysis activity. In terms of biological role, component of the proteasome core, a large protease complex with broad specificity involved in protein degradation. The protein is Proteasome subunit beta of Picrophilus torridus (strain ATCC 700027 / DSM 9790 / JCM 10055 / NBRC 100828 / KAW 2/3).